The sequence spans 808 residues: Probable ATP-dependent helicase MJ1401 (808 aa).

The short motif at 189-217 (YKIDELDIPEELKEIIKSRGIEELLPVQT) is the Q motif element. The Helicase ATP-binding domain occupies 221 to 391 (KAGLLNGDDL…QLNAKLVLYN (171 aa)). 234–241 (SATSSGKT) contributes to the ATP binding site. The short motif at 336 to 339 (DEIH) is the DEIH box element. A Helicase C-terminal domain is found at 396-585 (PLERHIIFCK…EDEEEEQILA (190 aa)).

This sequence belongs to the DEAD box helicase family.

This chain is Probable ATP-dependent helicase MJ1401, found in Methanocaldococcus jannaschii (strain ATCC 43067 / DSM 2661 / JAL-1 / JCM 10045 / NBRC 100440) (Methanococcus jannaschii).